The following is a 103-amino-acid chain: Small ribosomal subunit protein uS10 (103 aa).

This sequence belongs to the universal ribosomal protein uS10 family. In terms of assembly, part of the 30S ribosomal subunit.

Its function is as follows. Involved in the binding of tRNA to the ribosomes. This Psychrobacter sp. (strain PRwf-1) protein is Small ribosomal subunit protein uS10.